The primary structure comprises 316 residues: Protoheme IX farnesyltransferase (316 aa).

The next 9 membrane-spanning stretches (helical) occupy residues 32-52 (VMSL…GHIH), 53-73 (PVLG…SGAL), 93-113 (IPAG…LSGF), 116-136 (VILG…TIFF), 152-172 (NIVI…ACVT), 180-200 (TVLF…LALF), 221-241 (VTKH…ILPS), 252-271 (LVAA…VWRM), and 289-309 (IFYL…SIFV).

This sequence belongs to the UbiA prenyltransferase family. Protoheme IX farnesyltransferase subfamily.

The protein localises to the cell inner membrane. The catalysed reaction is heme b + (2E,6E)-farnesyl diphosphate + H2O = Fe(II)-heme o + diphosphate. It functions in the pathway porphyrin-containing compound metabolism; heme O biosynthesis; heme O from protoheme: step 1/1. Converts heme B (protoheme IX) to heme O by substitution of the vinyl group on carbon 2 of heme B porphyrin ring with a hydroxyethyl farnesyl side group. The sequence is that of Protoheme IX farnesyltransferase from Rhizobium leguminosarum bv. trifolii (strain WSM2304).